Reading from the N-terminus, the 100-residue chain is MPRRSYSVIGRVQGVGFRSWTRRTALRLDLRGWVRNEPDGTVRLCADGTDEALATLETALRKGPMFSRVDHVVKHDDPAHEGPLPDTFDIRFRAPGSASE.

One can recognise an Acylphosphatase-like domain in the interval 3–92 (RRSYSVIGRV…PLPDTFDIRF (90 aa)). Active-site residues include Arg-18 and Asn-36. The disordered stretch occupies residues 76 to 100 (DDPAHEGPLPDTFDIRFRAPGSASE).

The protein belongs to the acylphosphatase family.

It carries out the reaction an acyl phosphate + H2O = a carboxylate + phosphate + H(+). The chain is Acylphosphatase (acyP) from Nitratidesulfovibrio vulgaris (strain ATCC 29579 / DSM 644 / CCUG 34227 / NCIMB 8303 / VKM B-1760 / Hildenborough) (Desulfovibrio vulgaris).